The primary structure comprises 79 residues: Sulfur carrier protein TusA (79 aa).

Residue Cys-16 is the Cysteine persulfide intermediate of the active site.

It belongs to the sulfur carrier protein TusA family.

Its subcellular location is the cytoplasm. Its function is as follows. Sulfur carrier protein which probably makes part of a sulfur-relay system. In Pseudomonas aeruginosa (strain LESB58), this protein is Sulfur carrier protein TusA.